A 272-amino-acid chain; its full sequence is Putative MgpC-like protein MPN_366 (272 aa).

Disordered stretches follow at residues 65 to 84 (QESQKALNGSQSGSSDTSGS) and 171 to 196 (GSGQESSWNSQRSQKGLKTTPLPMPS). Residues 72-84 (NGSQSGSSDTSGS) are compositionally biased toward low complexity. Over residues 173-187 (GQESSWNSQRSQKGL) the composition is skewed to polar residues.

Belongs to the MgpC family.

The protein is Putative MgpC-like protein MPN_366 of Mycoplasma pneumoniae (strain ATCC 29342 / M129 / Subtype 1) (Mycoplasmoides pneumoniae).